Reading from the N-terminus, the 318-residue chain is NADH-ubiquinone oxidoreductase chain 1 (318 aa).

8 consecutive transmembrane segments (helical) span residues 2–22 (FMIN…FLTL), 68–88 (ISMF…MWTP), 100–120 (LGIL…LWSG), 146–166 (LAII…PTLI), 171–191 (HIWL…STLA), 222–242 (LFFL…TILF), 253–273 (ELYT…FLWV), and 293–313 (FLPL…ITAG).

It belongs to the complex I subunit 1 family. Core subunit of respiratory chain NADH dehydrogenase (Complex I) which is composed of 45 different subunits.

It is found in the mitochondrion inner membrane. It carries out the reaction a ubiquinone + NADH + 5 H(+)(in) = a ubiquinol + NAD(+) + 4 H(+)(out). Its function is as follows. Core subunit of the mitochondrial membrane respiratory chain NADH dehydrogenase (Complex I) which catalyzes electron transfer from NADH through the respiratory chain, using ubiquinone as an electron acceptor. Essential for the catalytic activity and assembly of complex I. The sequence is that of NADH-ubiquinone oxidoreductase chain 1 (MT-ND1) from Hipposideros armiger terasensis (Formosan leaf-nosed bat).